We begin with the raw amino-acid sequence, 413 residues long: Gamma-lactamase FDB1 (413 aa).

Zn(2+) is bound by residues histidine 126, histidine 128, aspartate 130, histidine 131, histidine 211, aspartate 235, and histidine 323.

Belongs to the metallo-beta-lactamase superfamily.

Its pathway is xenobiotic degradation. Gamma-lactamase; part of the Fusarium detoxification of benzoxazolinone cluster involved in the degradation of benzoxazolinones produced by the host plant. Maize, wheat, and rye produce the 2 benzoxazinone phytoanticipins 2,4-dihy-droxy-7-methoxy-1,4-benzoxazin-3-one (DIMBOA) and 2,4-dihydroxy-1,4-benzoxazin-3-one (DIBOA) that, due to their inherent instability once released, spontaneously degrade to the more stable corresponding benzoxazolinones, 6-methoxy-2-benzoxazolinone (MBOA) and 2-benzoxazolinone (BOA), respectively. The first step in the detoxification of benzoxazolinones involves the hydrolysis of the cyclic ester bond of benzoxazolinones by the gamma-lactamase FDB1 to aminophenols. FDB1 is able to convert BOA into 2-aminophenol (2-AP), as well as MBOA into 5-methoxy-2-aminophenol (2-AMP). The N-malonyltransferase FDB2 then metabolizes aminophenols via N-malonylation to non-toxic malonamic acids. FDB2 converts 2-AP into N-(2-hydroxyphenyl) malonamic acid (HPMA) and 2-AMP into N-(2-hydroxy-4-methoxyphenyl) malonamic acid (HMPMA). The cluster also contains 2 transcription factors (FDB3 and FPSE_08121), an aldo-keto reductase (FPSE_08125) that possibly associates with a ketone component of BOA and MBOA degradation, an esterase (FPSE_08126), an acyl-CoA transferase (FPSE_08120), a solute carrier protein (FPSE_08119) and a transmembrane transporter (FPSE_08127) proposed to shuttle metabolites of benzoxazolinone degradation. This is Gamma-lactamase FDB1 from Fusarium pseudograminearum (strain CS3096) (Wheat and barley crown-rot fungus).